A 246-amino-acid polypeptide reads, in one-letter code: Probable phosphatase ASA_1316 (246 aa).

Zn(2+) is bound by residues H8, H10, H16, H41, E74, H102, H132, D193, and H195.

The protein belongs to the PHP family. Requires Zn(2+) as cofactor.

This Aeromonas salmonicida (strain A449) protein is Probable phosphatase ASA_1316.